The following is a 162-amino-acid chain: Deoxyuridine 5'-triphosphate nucleotidohydrolase (162 aa).

The protein belongs to the dUTPase family. In terms of assembly, homotrimer. It depends on Mg(2+) as a cofactor.

The protein resides in the host cytoplasm. It is found in the virion. It carries out the reaction dUTP + H2O = dUMP + diphosphate + H(+). In terms of biological role, the viral dUTPase may play a role in lowering the dUTP concentration in natural infections to minimize misincorporation of deoxyuridine into the viral DNA and ensure the fidelity of genome replication. The protein is Deoxyuridine 5'-triphosphate nucleotidohydrolase of Ornithodoros (relapsing fever ticks).